The primary structure comprises 555 residues: Oxygen-dependent choline dehydrogenase (555 aa).

4–33 (DYIIIGAGSAGNVLATRLTEDADVSVLLLE) contacts FAD. A disordered region spans residues 180–202 (QQEGFGPMDRTVTPKGRRASTAR). His473 functions as the Proton acceptor in the catalytic mechanism.

Belongs to the GMC oxidoreductase family. It depends on FAD as a cofactor.

It carries out the reaction choline + A = betaine aldehyde + AH2. The enzyme catalyses betaine aldehyde + NAD(+) + H2O = glycine betaine + NADH + 2 H(+). Its pathway is amine and polyamine biosynthesis; betaine biosynthesis via choline pathway; betaine aldehyde from choline (cytochrome c reductase route): step 1/1. In terms of biological role, involved in the biosynthesis of the osmoprotectant glycine betaine. Catalyzes the oxidation of choline to betaine aldehyde and betaine aldehyde to glycine betaine at the same rate. This is Oxygen-dependent choline dehydrogenase from Serratia proteamaculans (strain 568).